We begin with the raw amino-acid sequence, 90 residues long: DNA-directed RNA polymerase subunit omega (90 aa).

This sequence belongs to the RNA polymerase subunit omega family. In terms of assembly, the RNAP catalytic core consists of 2 alpha, 1 beta, 1 beta' and 1 omega subunit. When a sigma factor is associated with the core the holoenzyme is formed, which can initiate transcription.

The catalysed reaction is RNA(n) + a ribonucleoside 5'-triphosphate = RNA(n+1) + diphosphate. Promotes RNA polymerase assembly. Latches the N- and C-terminal regions of the beta' subunit thereby facilitating its interaction with the beta and alpha subunits. In Saccharophagus degradans (strain 2-40 / ATCC 43961 / DSM 17024), this protein is DNA-directed RNA polymerase subunit omega.